Here is a 189-residue protein sequence, read N- to C-terminus: CASP-like protein 1F2 (189 aa).

Topologically, residues 1–27 (MESLEVANGKSSALGVSREASSPPQMG) are cytoplasmic. The chain crosses the membrane as a helical span at residues 28–48 (FFIAQVVLRFFTLAFTGAAIA). The Extracellular segment spans residues 49-77 (VMVTAKETVEVFSISFTVRYSYLSAFKFL). The chain crosses the membrane as a helical span at residues 78–98 (VGADAVVCGFSMLSLIFVSIF). The Cytoplasmic portion of the chain corresponds to 99-113 (NKGKSNHYFFLYFHD). A helical membrane pass occupies residues 114 to 134 (LILMVLSMSACAAATAVGYVG). At 135-156 (RYGQDKAAWMAVCGNVKMFCDK) the chain is on the extracellular side. The chain crosses the membrane as a helical span at residues 157-177 (ALASILLSLIGFICLFLLTIM). Topologically, residues 178 to 189 (AARNLRVSGHLI) are cytoplasmic.

Belongs to the Casparian strip membrane proteins (CASP) family. As to quaternary structure, homodimer and heterodimers.

The protein localises to the cell membrane. This Vitis vinifera (Grape) protein is CASP-like protein 1F2.